We begin with the raw amino-acid sequence, 776 residues long: MAAKRSIYCLLLLPLLLSLLIWIPSISLAATNPDDVAAINGLFAALGAPVLPGWIASGGDPCGEAWQGIICNVSDIISITVNAANLQGELGDNLAKFTSIRGIDFSNNRIGGSIPSTLPVTLQHFFLSANQFTGSIPESLGTLSFLNDMSLNDNLLSGELPDVFQNLVGLINLDISSNNISGTLPPSMENLLTLTTLRVQNNQLSGTLDVLQGLPLQDLNIENNLFSGPIPDKLLSIPKFLHEGNPFNATMINSTSTAPSLSPSLSPTKPAPTRPFSGVPPPPNERNRGKVADGPSDSEGSSSENSKGKNSSHTKKIILIAFAGVLVFIILVLAILLLLPKCARRREHANRVFKPHQVGADRGSRENALENGTPVLPPPGRSEKVQREPFKKAGEEPKVLHDLERLRRPAPISRQESQDIDFSMLMPPPPPPPPPPPPPPLDEKVTVMPIISPERPVKKTSPKRLPLTSVKHYSIASLQQYTESFAQENLIGSGMLGSVYRARLPNGKLFAVKKLDKRASEQQQDHEFIELVNNIDMIRHSNIVELVGYCAEHDQRLLVYEYCSNGTLQDGLHSDDEFKKKLSWNTRVSMALGAARALEYLHEVCEPPIIHRNFKSANVLLDDDLSVLVSDCGLAPLISSGSVSQLSGQLLAAYGYGAPEFDSGIYTWQSDVYSFGVVMLELLTGRMSYDRDRSRGEQFLVRWAIPQLHDIDALGKMVDPSLNGQYPAKSLSHFADIISRCVQSEPEFRPLMSEVVQDLLDMIRRERHGSGDSTAD.

The signal sequence occupies residues Met1–Ala29. Topologically, residues Ala30–Asp35 are cytoplasmic. A helical membrane pass occupies residues Val36–Ala56. The Extracellular segment spans residues Ser57 to Lys316. N-linked (GlcNAc...) asparagine glycosylation is present at Asn72. LRR repeat units lie at residues Ser99–Val120, Thr121–Leu143, Phe145–Leu167, Gly169–Leu191, Thr193–Pro215, and Leu216–Ser236. N-linked (GlcNAc...) asparagine glycosylation occurs at Asn179. 2 N-linked (GlcNAc...) asparagine glycosylation sites follow: Asn248 and Asn253. Residues Met251 to Ser311 are disordered. The segment covering Ser254–Thr268 has biased composition (low complexity). The segment covering Lys269 to Asn284 has biased composition (pro residues). Positions Ser298 to Lys309 are enriched in low complexity. A glycan (N-linked (GlcNAc...) asparagine) is linked at Asn310. A helical transmembrane segment spans residues Ile317–Leu337. Topologically, residues Leu338–Asp776 are cytoplasmic. Residues Pro355–Pro440 form a disordered region. The span at Arg381–Arg407 shows a compositional bias: basic and acidic residues. A compositionally biased stretch (pro residues) spans Met426 to Pro440. Residues Phe485–Ile763 enclose the Protein kinase domain. Residues Ile491–Val499 and Lys513 contribute to the ATP site.

The protein belongs to the protein kinase superfamily. Ser/Thr protein kinase family. As to expression, expressed in seedlings, roots, stems, leaves, flowers and siliques.

The protein resides in the membrane. Not essential for epidermal patterning and not redundant with STRUBBELIG. The protein is Protein STRUBBELIG-RECEPTOR FAMILY 3 (SRF3) of Arabidopsis thaliana (Mouse-ear cress).